The chain runs to 192 residues: Phosphoheptose isomerase (192 aa).

Residues Leu35–Asn192 enclose the SIS domain. Asn50–Gly52 lines the substrate pocket. Zn(2+) is bound by residues His59 and Glu63. Substrate-binding positions include Glu63, Asn92 to Asp93, Ser118 to Ser120, Ser123, and Gln170. Zn(2+) is bound by residues Gln170 and His178.

It belongs to the SIS family. GmhA subfamily. Homotetramer. Zn(2+) serves as cofactor.

It localises to the cytoplasm. The enzyme catalyses 2 D-sedoheptulose 7-phosphate = D-glycero-alpha-D-manno-heptose 7-phosphate + D-glycero-beta-D-manno-heptose 7-phosphate. It functions in the pathway carbohydrate biosynthesis; D-glycero-D-manno-heptose 7-phosphate biosynthesis; D-glycero-alpha-D-manno-heptose 7-phosphate and D-glycero-beta-D-manno-heptose 7-phosphate from sedoheptulose 7-phosphate: step 1/1. Catalyzes the isomerization of sedoheptulose 7-phosphate in D-glycero-D-manno-heptose 7-phosphate. This Helicobacter pylori (strain HPAG1) protein is Phosphoheptose isomerase.